The chain runs to 423 residues: Gamma-glutamyl phosphate reductase (423 aa).

Belongs to the gamma-glutamyl phosphate reductase family.

The protein resides in the cytoplasm. It catalyses the reaction L-glutamate 5-semialdehyde + phosphate + NADP(+) = L-glutamyl 5-phosphate + NADPH + H(+). It functions in the pathway amino-acid biosynthesis; L-proline biosynthesis; L-glutamate 5-semialdehyde from L-glutamate: step 2/2. Its function is as follows. Catalyzes the NADPH-dependent reduction of L-glutamate 5-phosphate into L-glutamate 5-semialdehyde and phosphate. The product spontaneously undergoes cyclization to form 1-pyrroline-5-carboxylate. This is Gamma-glutamyl phosphate reductase from Pseudomonas entomophila (strain L48).